The sequence spans 402 residues: Flavohemoprotein (402 aa).

In terms of domain architecture, Globin spans 1–138 (MLSPEVRALV…LADLLIGRER (138 aa)). His85 serves as a coordination point for heme b. Residues Tyr95 and Glu137 each act as charge relay system in the active site. Residues 149-402 (GGWTGWRAFK…AEVFGTGGVA (254 aa)) are reductase. The 110-residue stretch at 152 to 261 (TGWRAFKVVR…SPPQGDFTLD (110 aa)) folds into the FAD-binding FR-type domain. FAD is bound by residues Tyr190 and 206–209 (RQYS). 274-279 (GVGLTP) is an NADP(+) binding site. An FAD-binding site is contributed by 395 to 398 (VFGT).

The protein belongs to the globin family. Two-domain flavohemoproteins subfamily. It in the C-terminal section; belongs to the flavoprotein pyridine nucleotide cytochrome reductase family. It depends on heme b as a cofactor. Requires FAD as cofactor.

It catalyses the reaction 2 nitric oxide + NADPH + 2 O2 = 2 nitrate + NADP(+) + H(+). It carries out the reaction 2 nitric oxide + NADH + 2 O2 = 2 nitrate + NAD(+) + H(+). Its function is as follows. Is involved in NO detoxification in an aerobic process, termed nitric oxide dioxygenase (NOD) reaction that utilizes O(2) and NAD(P)H to convert NO to nitrate, which protects the bacterium from various noxious nitrogen compounds. Therefore, plays a central role in the inducible response to nitrosative stress. The protein is Flavohemoprotein of Bordetella bronchiseptica (strain ATCC BAA-588 / NCTC 13252 / RB50) (Alcaligenes bronchisepticus).